A 414-amino-acid chain; its full sequence is Glutathione gamma-glutamylcysteinyltransferase (414 aa).

Residues 37-256 form the Peptidase C83 domain; it reads QLKKSFYKRQ…GYVLLEPMHI (220 aa).

The protein belongs to the phytochelatin synthase family.

The catalysed reaction is [Glu(-Cys)](n)-Gly + glutathione + H(+) = [Glu(-Cys)](n+1)-Gly + glycine. Functionally, required for detoxification of heavy metals such as cadmium and arsenate. This is Glutathione gamma-glutamylcysteinyltransferase from Schizosaccharomyces pombe (strain 972 / ATCC 24843) (Fission yeast).